The primary structure comprises 277 residues: Myelin proteolipid protein (277 aa).

At 1-10 (MGLLECCARC) the chain is on the cytoplasmic side. S-palmitoyl cysteine attachment occurs at residues Cys6, Cys7, and Cys10. Residues 11–36 (LVGAPFASLVATGLCFFGVALFCGCG) form a helical membrane-spanning segment. At 37-59 (HEALTGTEKLIETYFSKNYQDYE) the chain is on the extracellular side. Residues 60–88 (YLINVIHAFQYVIYGTASFFFLYGALLLA) traverse the membrane as a helical segment. Residues 89-151 (EGFYTTGAVR…LGKWLGHPDK (63 aa)) are Cytoplasmic-facing. Cys109 carries the S-palmitoyl cysteine lipid modification. Phosphoserine is present on Ser114. Phosphothreonine is present on residues Thr116 and Thr118. 2 S-palmitoyl cysteine lipidation sites follow: Cys139 and Cys141. A helical membrane pass occupies residues 152–178 (FVGITYALTVVWLLVFACSAVPVYIYF). The Extracellular segment spans residues 179–238 (NTWTTCQSIAFPSKTSASIGTLCADARMYGVLPWNAFPGKVCGSNLLSICKTAEFQMTFH). Intrachain disulfides connect Cys184–Cys228 and Cys201–Cys220. A lipid anchor (O-palmitoyl threonine) is attached at Thr199. Residues 239-268 (LFIAAFVGAAATLVSLLTFMIAATYNFAVL) traverse the membrane as a helical segment. Residues 269-277 (KLMGRGTKF) lie on the Cytoplasmic side of the membrane.

The protein belongs to the myelin proteolipid protein family. Interacts with MAL.

The protein localises to the cell membrane. It localises to the myelin membrane. Functionally, this is the major myelin protein from the central nervous system. It plays an important role in the formation or maintenance of the multilamellar structure of myelin. The protein is Myelin proteolipid protein (PLP1) of Oryctolagus cuniculus (Rabbit).